The primary structure comprises 206 residues: Large ribosomal subunit protein uL4 (206 aa).

A disordered region spans residues 44 to 87 (NRQGTQSAKTRSEVSGGGRKPWRQKGTGHARQGSTRSPQWTGGG).

It belongs to the universal ribosomal protein uL4 family. As to quaternary structure, part of the 50S ribosomal subunit.

One of the primary rRNA binding proteins, this protein initially binds near the 5'-end of the 23S rRNA. It is important during the early stages of 50S assembly. It makes multiple contacts with different domains of the 23S rRNA in the assembled 50S subunit and ribosome. Functionally, forms part of the polypeptide exit tunnel. In Lachnospira eligens (strain ATCC 27750 / DSM 3376 / VPI C15-48 / C15-B4) (Eubacterium eligens), this protein is Large ribosomal subunit protein uL4.